Reading from the N-terminus, the 410-residue chain is Divergent protein kinase domain 1A (410 aa).

The Cytoplasmic segment spans residues 1 to 5 (MARLS). A helical membrane pass occupies residues 6–26 (YVRIKYLFFSWLAVFIGSWVI). Residues 27–410 (YVRYNSYTEL…WKKISHTNDS (384 aa)) are Lumenal-facing.

The protein belongs to the DIPK family. Post-translationally, among the many cysteines in the lumenal domain, most are probably involved in disulfide bonds.

Its subcellular location is the endoplasmic reticulum membrane. This Xenopus laevis (African clawed frog) protein is Divergent protein kinase domain 1A (dipk1a).